The sequence spans 444 residues: MGKLFGTDGVRGVANQGLPPELAFRLGRAGAAVLAGKGDRVRVVVGRDTRISGDMLEAALVAGICSVGGQVLKVGIIPTPAVAWLTRDLGADAGVVISASHNPVADNGIKFFSASGYKLPDPVEEEIERLVLAPEDNLPRPVGVDLGRVKEVTEAPERYIAHVCSTAGRGLAGMQVVLDCANGAACRVAPAIFQRLGAEVSLLHNVPDGTNINVRCGSTHPESLQAEVVARGAAVGLAFDGDADRVIAVDEKGQVVDGDVIMTILALYRQEQGGLPGGQVVVTVMSNYGLHQALTAAGLRVQQTRVGDRYVLEEMLKSGAVLGGEQSGHIILLEHNTTGDGLITGVQLLQVMAATGRPLSELAAAMPRLPQILVNVRVGDKDAAMASPALQAAVAAAREQLAGRGRVLVRPSGTEPIIRLMVEGPDREELENIMAGLQRVASGL.

S100 functions as the Phosphoserine intermediate in the catalytic mechanism. 4 residues coordinate Mg(2+): S100, D240, D242, and D244. The residue at position 100 (S100) is a Phosphoserine.

It belongs to the phosphohexose mutase family. Mg(2+) serves as cofactor. Activated by phosphorylation.

It carries out the reaction alpha-D-glucosamine 1-phosphate = D-glucosamine 6-phosphate. In terms of biological role, catalyzes the conversion of glucosamine-6-phosphate to glucosamine-1-phosphate. This is Phosphoglucosamine mutase from Moorella thermoacetica (strain ATCC 39073 / JCM 9320).